A 305-amino-acid polypeptide reads, in one-letter code: Elongation factor Ts (305 aa).

Residues threonine 81–valine 84 form an involved in Mg(2+) ion dislocation from EF-Tu region.

This sequence belongs to the EF-Ts family.

The protein resides in the cytoplasm. In terms of biological role, associates with the EF-Tu.GDP complex and induces the exchange of GDP to GTP. It remains bound to the aminoacyl-tRNA.EF-Tu.GTP complex up to the GTP hydrolysis stage on the ribosome. In Nitratiruptor sp. (strain SB155-2), this protein is Elongation factor Ts.